A 178-amino-acid polypeptide reads, in one-letter code: MIVVVDCKDSFVYNLVEYISLFDKVRVVEKESAGLLRKMSFDGVVISPGPGKPDRSLEFVFKMGVPVLGVCLGHQMIAEVFGGKVGRVEPVHGKTSLVEHDGRGIFKGVRNPLRAGRYHSLAVLEPPEGFEVCAKSEDGVVMGLRRGKIHGVQFHPESVLTEDGVRMIRNFVEMCHDG.

Residues 1-178 (MIVVVDCKDS…RNFVEMCHDG (178 aa)) form the Glutamine amidotransferase type-1 domain. 49-51 (GPG) is a binding site for L-glutamine. The active-site Nucleophile; for GATase activity is the cysteine 71. L-glutamine is bound by residues glutamine 75 and 120–121 (SL). Residues histidine 155 and glutamate 157 each act as for GATase activity in the active site.

Heterotetramer consisting of two non-identical subunits: a beta subunit (TrpG) and a large alpha subunit (TrpE).

The catalysed reaction is chorismate + L-glutamine = anthranilate + pyruvate + L-glutamate + H(+). It participates in amino-acid biosynthesis; L-tryptophan biosynthesis; L-tryptophan from chorismate: step 1/5. In terms of biological role, part of a heterotetrameric complex that catalyzes the two-step biosynthesis of anthranilate, an intermediate in the biosynthesis of L-tryptophan. In the first step, the glutamine-binding beta subunit (TrpG) of anthranilate synthase (AS) provides the glutamine amidotransferase activity which generates ammonia as a substrate that, along with chorismate, is used in the second step, catalyzed by the large alpha subunit of AS (TrpE) to produce anthranilate. In the absence of TrpG, TrpE can synthesize anthranilate directly from chorismate and high concentrations of ammonia. This is Anthranilate synthase component 2 (trpG) from Archaeoglobus fulgidus (strain ATCC 49558 / DSM 4304 / JCM 9628 / NBRC 100126 / VC-16).